Here is a 461-residue protein sequence, read N- to C-terminus: MLKIFNTLTRQKEEFKPIHAGEVGMYVCGITVYDLCHIGHGRTFVAFDVVARYLRFLGYKLKYVRNITDIDDKIIKRANENGESFVALVDRMIAEMHKDFDALNILRPDMEPRATHHIAEIIELTEQLIAKGHAYVADNGDVMFDVPTDPTYGVLSRQDLDQLQAGARVDVVDDKRNPMDFVLWKMSKEGEPSWPSPWGAGRPGWHIECSAMNCKQLGNHFDIHGGGSDLMFPHHENEIAQSTCAHDGQYVNYWMHSGMVMVDREKMSKSLGNFFTVRDVLKYYDAETVRYFLMSGHYRSQLNYSEENLKQTRAALERLYTALRGTDKTVAPAGGEAFEARFIEAMDDDFNTPEAYSVLFDMAREVNRLKAEDMAAANAMASHLRKLSAVLGLLEQEPEAFLQSGAQADDSEVAEIEALIQQRLDARKAKDWAAADAARDRLNEMGIVLEDGPQGTTWRRK.

Cys28 serves as a coordination point for Zn(2+). The 'HIGH' region signature appears at Ile30 to His40. Residues Cys209, His234, and Glu238 each coordinate Zn(2+). The 'KMSKS' region signature appears at Lys266–Ser270. Lys269 provides a ligand contact to ATP.

The protein belongs to the class-I aminoacyl-tRNA synthetase family. In terms of assembly, monomer. Zn(2+) serves as cofactor.

Its subcellular location is the cytoplasm. It catalyses the reaction tRNA(Cys) + L-cysteine + ATP = L-cysteinyl-tRNA(Cys) + AMP + diphosphate. The chain is Cysteine--tRNA ligase from Shigella boydii serotype 18 (strain CDC 3083-94 / BS512).